The following is a 156-amino-acid chain: Ribosomal RNA large subunit methyltransferase H (156 aa).

Residues L73, G104, and 123–128 each bind S-adenosyl-L-methionine; that span reads VSSLTL.

This sequence belongs to the RNA methyltransferase RlmH family. As to quaternary structure, homodimer.

The protein resides in the cytoplasm. It carries out the reaction pseudouridine(1915) in 23S rRNA + S-adenosyl-L-methionine = N(3)-methylpseudouridine(1915) in 23S rRNA + S-adenosyl-L-homocysteine + H(+). Its function is as follows. Specifically methylates the pseudouridine at position 1915 (m3Psi1915) in 23S rRNA. The chain is Ribosomal RNA large subunit methyltransferase H from Paraburkholderia phymatum (strain DSM 17167 / CIP 108236 / LMG 21445 / STM815) (Burkholderia phymatum).